The sequence spans 330 residues: Diacylglycerol acyltransferase/mycolyltransferase Ag85B (330 aa).

An N-terminal signal peptide occupies residues 1–40 (MTDLSKKVRAWGRRLLVGTAAAVTLPGLIGLAGGAPTAGA). Residue 82–83 (LR) coordinates substrate. The fibronectin-binding stretch occupies residues 98–108 (FEWYYQSGLSI). Cys-127 and Cys-132 are disulfide-bonded. Substrate contacts are provided by Ser-166 and Asp-194. The active-site Nucleophile is Ser-166. Glu-270 is a catalytic residue. Residues 272–275 (FVRS), Lys-279, and 302–304 (HSW) each bind substrate. His-302 is a catalytic residue.

The protein belongs to the mycobacterial A85 antigen family.

It localises to the secreted. It catalyses the reaction 2 alpha,alpha'-trehalose 6-mycolate = alpha,alpha'-trehalose 6,6'-bismycolate + alpha,alpha-trehalose. The enzyme catalyses an acyl-CoA + a 1,2-diacyl-sn-glycerol = a triacyl-sn-glycerol + CoA. The antigen 85 proteins (FbpA, FbpB, FbpC) are responsible for the high affinity of mycobacteria for fibronectin, a large adhesive glycoprotein, which facilitates the attachment of M.tuberculosis to murine alveolar macrophages (AMs). They also help to maintain the integrity of the cell wall by catalyzing the transfer of mycolic acids to cell wall arabinogalactan and through the synthesis of alpha,alpha-trehalose dimycolate (TDM, cord factor). They catalyze the transfer of a mycoloyl residue from one molecule of alpha,alpha-trehalose monomycolate (TMM) to another TMM, leading to the formation of TDM. The polypeptide is Diacylglycerol acyltransferase/mycolyltransferase Ag85B (fbpB) (Mycobacterium scrofulaceum).